Reading from the N-terminus, the 463-residue chain is ATP-dependent protease ATPase subunit HslU (463 aa).

Residues Ile-19, 61 to 66 (GVGKTE), Asp-277, Glu-341, and Arg-413 contribute to the ATP site.

It belongs to the ClpX chaperone family. HslU subfamily. In terms of assembly, a double ring-shaped homohexamer of HslV is capped on each side by a ring-shaped HslU homohexamer. The assembly of the HslU/HslV complex is dependent on binding of ATP.

Its subcellular location is the cytoplasm. In terms of biological role, ATPase subunit of a proteasome-like degradation complex; this subunit has chaperone activity. The binding of ATP and its subsequent hydrolysis by HslU are essential for unfolding of protein substrates subsequently hydrolyzed by HslV. HslU recognizes the N-terminal part of its protein substrates and unfolds these before they are guided to HslV for hydrolysis. The chain is ATP-dependent protease ATPase subunit HslU from Bacillus cereus (strain ATCC 14579 / DSM 31 / CCUG 7414 / JCM 2152 / NBRC 15305 / NCIMB 9373 / NCTC 2599 / NRRL B-3711).